Reading from the N-terminus, the 154-residue chain is Ribonuclease H (154 aa).

One can recognise an RNase H type-1 domain in the interval 5–147 (GKSRVAIYTD…ADMLARGEVE (143 aa)). Mg(2+) is bound by residues D14, E53, D75, and D139.

It belongs to the RNase H family. As to quaternary structure, monomer. Mg(2+) is required as a cofactor.

The protein resides in the cytoplasm. It catalyses the reaction Endonucleolytic cleavage to 5'-phosphomonoester.. Functionally, endonuclease that specifically degrades the RNA of RNA-DNA hybrids. This chain is Ribonuclease H, found in Anaplasma marginale (strain St. Maries).